Consider the following 288-residue polypeptide: uncharacterized protein (288 aa).

The protein to M.bovis Mb1522c, M.leprae ML1804 and M.avium MAV321.

This is an uncharacterized protein from Mycobacterium tuberculosis (strain ATCC 25618 / H37Rv).